The sequence spans 146 residues: PTS system fructose-specific EIIA component (146 aa).

The PTS EIIA type-4 domain maps to 1-124 (MISVIISGHG…NLKAMSQQSF (124 aa)). H9 (tele-phosphohistidine intermediate) is an active-site residue. Residue H9 is modified to Phosphohistidine; by HPr.

It is found in the cytoplasm. In terms of biological role, the phosphoenolpyruvate-dependent sugar phosphotransferase system (sugar PTS), a major carbohydrate active transport system, catalyzes the phosphorylation of incoming sugar substrates concomitantly with their translocation across the cell membrane. The enzyme II LevDE PTS system is involved in fructose transport. LevD and LevE act as negative regulators of the levanase operon. They may be involved in a PTS-mediated phosphorylation of a regulator. The polypeptide is PTS system fructose-specific EIIA component (Bacillus subtilis (strain 168)).